Reading from the N-terminus, the 223-residue chain is MTCCGCSGGCGSSCGGCGSSCCKPVCCCVPVCSCSSCGGCKGGCGSCGGCKGGCGSCGGCKGGCGSCGGCKGGCCQSSCCKPCCCQSSCCKPCCSSGCGSSCCQSSCCKPCCCQSSCCKPCCSSGCGSSCCQSSCCKPCCCQSSCCKPCCCQSSCCKPCCSSGCGSSCCQSSCCKPCCCQSSCCKPCCCQSSCCKPCCCQSSCCKPCCCQSSCCAPVCCQCKI.

14 tandem repeats follow at residues 21-24 (CCKP), 27-30 (CCVP), 79-82 (CCKP), 89-92 (CCKP), 107-110 (CCKP), 117-120 (CCKP), 135-138 (CCKP), 145-148 (CCKP), 155-158 (CCKP), 173-176 (CCKP), 183-186 (CCKP), 193-196 (CCKP), 203-206 (CCKP), and 213-216 (CCAP). Residues 21–216 (CCKPVCCCVP…CCCQSSCCAP (196 aa)) are 14 X 4 AA repeats of C-C-X-P.

This sequence belongs to the KRTAP type 5 family. As to quaternary structure, interacts with hair keratins. As to expression, expressed during the active phases of the hair cycle in the medulla and the inner root sheath of the forming hair. Also expressed in the upper layers of the epidermis of skin.

In the hair cortex, hair keratin intermediate filaments are embedded in an interfilamentous matrix, consisting of hair keratin-associated protein (KRTAP), which are essential for the formation of a rigid and resistant hair shaft through their extensive disulfide bond cross-linking with abundant cysteine residues of hair keratins. The matrix proteins include the high-sulfur and high-glycine-tyrosine keratins. This is Keratin-associated protein 5-4 from Mus musculus (Mouse).